Here is a 208-residue protein sequence, read N- to C-terminus: Small ribosomal subunit protein uS4 (208 aa).

In terms of domain architecture, S4 RNA-binding spans 98-163 (TRLDNVVFRL…TPLFKEIVDG (66 aa)).

The protein belongs to the universal ribosomal protein uS4 family. In terms of assembly, part of the 30S ribosomal subunit. Contacts protein S5. The interaction surface between S4 and S5 is involved in control of translational fidelity.

In terms of biological role, one of the primary rRNA binding proteins, it binds directly to 16S rRNA where it nucleates assembly of the body of the 30S subunit. With S5 and S12 plays an important role in translational accuracy. This chain is Small ribosomal subunit protein uS4, found in Heliobacterium modesticaldum (strain ATCC 51547 / Ice1).